The primary structure comprises 364 residues: Uroporphyrinogen decarboxylase (364 aa).

Substrate-binding positions include 28–32 (RQAGR), aspartate 78, tyrosine 160, threonine 215, and histidine 333.

Belongs to the uroporphyrinogen decarboxylase family. Homodimer.

It is found in the cytoplasm. It catalyses the reaction uroporphyrinogen III + 4 H(+) = coproporphyrinogen III + 4 CO2. The protein operates within porphyrin-containing compound metabolism; protoporphyrin-IX biosynthesis; coproporphyrinogen-III from 5-aminolevulinate: step 4/4. Functionally, catalyzes the decarboxylation of four acetate groups of uroporphyrinogen-III to yield coproporphyrinogen-III. The polypeptide is Uroporphyrinogen decarboxylase (Burkholderia cenocepacia (strain ATCC BAA-245 / DSM 16553 / LMG 16656 / NCTC 13227 / J2315 / CF5610) (Burkholderia cepacia (strain J2315))).